The chain runs to 128 residues: Small ribosomal subunit protein uS12 (128 aa).

D89 is modified (3-methylthioaspartic acid).

It belongs to the universal ribosomal protein uS12 family. Part of the 30S ribosomal subunit. Contacts proteins S8 and S17. May interact with IF1 in the 30S initiation complex.

In terms of biological role, with S4 and S5 plays an important role in translational accuracy. Its function is as follows. Interacts with and stabilizes bases of the 16S rRNA that are involved in tRNA selection in the A site and with the mRNA backbone. Located at the interface of the 30S and 50S subunits, it traverses the body of the 30S subunit contacting proteins on the other side and probably holding the rRNA structure together. The combined cluster of proteins S8, S12 and S17 appears to hold together the shoulder and platform of the 30S subunit. This Campylobacter jejuni subsp. doylei (strain ATCC BAA-1458 / RM4099 / 269.97) protein is Small ribosomal subunit protein uS12.